Reading from the N-terminus, the 66-residue chain is Large ribosomal subunit protein uL29 (66 aa).

The protein belongs to the universal ribosomal protein uL29 family.

This Thermotoga neapolitana (strain ATCC 49049 / DSM 4359 / NBRC 107923 / NS-E) protein is Large ribosomal subunit protein uL29.